Reading from the N-terminus, the 131-residue chain is Small ribosomal subunit protein uS8 (131 aa).

It belongs to the universal ribosomal protein uS8 family. As to quaternary structure, part of the 30S ribosomal subunit. Contacts proteins S5 and S12.

Functionally, one of the primary rRNA binding proteins, it binds directly to 16S rRNA central domain where it helps coordinate assembly of the platform of the 30S subunit. This is Small ribosomal subunit protein uS8 from Porphyromonas gingivalis (strain ATCC 33277 / DSM 20709 / CIP 103683 / JCM 12257 / NCTC 11834 / 2561).